The chain runs to 883 residues: Serine/threonine-protein kinase greatwall (883 aa).

An N-acetylmethionine modification is found at M1. The interval 1–23 is disordered; that stretch reads MEPTMGGEMESGGGAATGECVNR. The Protein kinase domain occupies 35–839; sequence FTIVKPISRG…MKELKHHPLF (805 aa). ATP is bound by residues 41–49 and K62; that span reads ISRGAFGKV. The active-site Proton acceptor is the D156. Phosphothreonine is present on residues T209 and T224. S295 is modified (phosphoserine). The interval 298–317 is disordered; that stretch reads RLATSSTSSPSHTFISSMES. The span at 301–314 shows a compositional bias: low complexity; sequence TSSTSSPSHTFISS. 2 positions are modified to phosphoserine: S373 and S456. The interval 511-530 is disordered; that stretch reads ENVGSSFTDKHQTPEKSPVP. T523 is modified (phosphothreonine). 2 positions are modified to phosphoserine: S556 and S560. A disordered region spans residues 569 to 597; sequence IHMDSDSSFPGISIMESPLGGQSLDPDKN. Phosphoserine is present on residues S635, S661, and S672. The interval 706-737 is disordered; sequence RSDMPYQQTPNQVKSETPYRTPKSVRRGAAPV. Residues 710–720 are compositionally biased toward polar residues; it reads PYQQTPNQVKS. At T726 the chain carries Phosphothreonine. S729 is subject to Phosphoserine. At T745 the chain carries Phosphothreonine; by CDK1. The AGC-kinase C-terminal domain maps to 840-883; it reads SGVDWENLQHQKMPFIPQPDDETDTSYFEARNNAQHLTVSGFSL. S879 and S882 each carry phosphoserine.

This sequence belongs to the protein kinase superfamily. AGC Ser/Thr protein kinase family. Phosphorylation at Thr-745 by CDK1 during M phase activates its kinase activity. Maximum phosphorylation occurs in prometaphase.

The protein resides in the cytoplasm. The protein localises to the cytoskeleton. Its subcellular location is the microtubule organizing center. It is found in the centrosome. It localises to the nucleus. It catalyses the reaction L-seryl-[protein] + ATP = O-phospho-L-seryl-[protein] + ADP + H(+). The enzyme catalyses L-threonyl-[protein] + ATP = O-phospho-L-threonyl-[protein] + ADP + H(+). In terms of biological role, serine/threonine kinase that plays a key role in M phase by acting as a regulator of mitosis entry and maintenance. Acts by promoting the inactivation of protein phosphatase 2A (PP2A) during M phase: does not directly inhibit PP2A but acts by mediating phosphorylation and subsequent activation of ARPP19 and ENSA at 'Ser-62' and 'Ser-67', respectively. ARPP19 and ENSA are phosphatase inhibitors that specifically inhibit the PPP2R2D (PR55-delta) subunit of PP2A. Inactivation of PP2A during M phase is essential to keep cyclin-B1-CDK1 activity high. Following DNA damage, it is also involved in checkpoint recovery by being inhibited. The sequence is that of Serine/threonine-protein kinase greatwall (MASTL) from Bos taurus (Bovine).